A 112-amino-acid chain; its full sequence is Large ribosomal subunit protein mL53 (112 aa).

This sequence belongs to the mitochondrion-specific ribosomal protein mL53 family. In terms of assembly, component of the mitochondrial large ribosomal subunit (mt-LSU). Mature mammalian 55S mitochondrial ribosomes consist of a small (28S) and a large (39S) subunit. The 28S small subunit contains a 12S ribosomal RNA (12S mt-rRNA) and 30 different proteins. The 39S large subunit contains a 16S rRNA (16S mt-rRNA), a copy of mitochondrial valine transfer RNA (mt-tRNA(Val)), which plays an integral structural role, and 52 different proteins. mL53 is located at the L7/L12 stalk.

The protein resides in the mitochondrion. In Homo sapiens (Human), this protein is Large ribosomal subunit protein mL53 (MRPL53).